A 300-amino-acid polypeptide reads, in one-letter code: Acetyl-coenzyme A carboxylase carboxyl transferase subunit beta (300 aa).

Residues 24 to 293 (LWTNCESCSQ…NAPGAALGGA (270 aa)) form the CoA carboxyltransferase N-terminal domain. 4 residues coordinate Zn(2+): Cys28, Cys31, Cys47, and Cys50. Residues 28–50 (CESCSQMILVKDLQKAMNVCPHC) form a C4-type zinc finger.

The protein belongs to the AccD/PCCB family. In terms of assembly, acetyl-CoA carboxylase is a heterohexamer composed of biotin carboxyl carrier protein (AccB), biotin carboxylase (AccC) and two subunits each of ACCase subunit alpha (AccA) and ACCase subunit beta (AccD). Requires Zn(2+) as cofactor.

Its subcellular location is the cytoplasm. It catalyses the reaction N(6)-carboxybiotinyl-L-lysyl-[protein] + acetyl-CoA = N(6)-biotinyl-L-lysyl-[protein] + malonyl-CoA. It participates in lipid metabolism; malonyl-CoA biosynthesis; malonyl-CoA from acetyl-CoA: step 1/1. Functionally, component of the acetyl coenzyme A carboxylase (ACC) complex. Biotin carboxylase (BC) catalyzes the carboxylation of biotin on its carrier protein (BCCP) and then the CO(2) group is transferred by the transcarboxylase to acetyl-CoA to form malonyl-CoA. In Gluconacetobacter diazotrophicus (strain ATCC 49037 / DSM 5601 / CCUG 37298 / CIP 103539 / LMG 7603 / PAl5), this protein is Acetyl-coenzyme A carboxylase carboxyl transferase subunit beta.